A 428-amino-acid chain; its full sequence is Putative zinc finger protein 355P (428 aa).

Residues 1–64 enclose the KRAB domain; that stretch reads MRDEVAEKEK…KHPGLTQHNI (64 aa). 3 consecutive C2H2-type zinc fingers follow at residues 72–94, 100–122, and 128–150; these read YKCK…QRIH, YKCE…MRAH, and YKCE…KRIH. The C2H2-type 4; degenerate zinc finger occupies 156–178; sequence YKFEECDKAFYWVLSFTKHMIIH. The C2H2-type 5; degenerate zinc-finger motif lies at 184 to 206; it reads YKYQECGKAFKWSSNLTIHKRIH. The segment at 212–234 adopts a C2H2-type 6; degenerate zinc-finger fold; sequence CKCEECGKACKQSLGLTIQKRIH. A C2H2-type 7; degenerate zinc finger spans residues 263–285; that stretch reads YNCEKCGKAFYCSSNLIQNNIVH. C2H2-type zinc fingers lie at residues 291–313 and 335–357; these read YKCQ…KIIH and YKCE…MIVH. Residues 363 to 385 form a C2H2-type 10; degenerate zinc finger; that stretch reads YKCEECGKAFKWSSELTIHQRIR. The C2H2-type 11 zinc finger occupies 391 to 413; that stretch reads YKCEECVRVFKHSSKLNEHKRNH.

Belongs to the krueppel C2H2-type zinc-finger protein family.

It is found in the nucleus. May be involved in transcriptional regulation. The sequence is that of Putative zinc finger protein 355P (ZNF355P) from Homo sapiens (Human).